The sequence spans 270 residues: Putative tRNA (cytidine(32)/guanosine(34)-2'-O)-methyltransferase (270 aa).

5 residues coordinate S-adenosyl-L-methionine: G53, W55, D78, D94, and D119. K159 serves as the catalytic Proton acceptor.

This sequence belongs to the class I-like SAM-binding methyltransferase superfamily. RNA methyltransferase RlmE family. TRM7 subfamily.

Its subcellular location is the cytoplasm. It carries out the reaction cytidine(32)/guanosine(34) in tRNA + 2 S-adenosyl-L-methionine = 2'-O-methylcytidine(32)/2'-O-methylguanosine(34) in tRNA + 2 S-adenosyl-L-homocysteine + 2 H(+). Methylates the 2'-O-ribose of nucleotides at positions 32 and 34 of the tRNA anticodon loop of substrate tRNAs. The polypeptide is Putative tRNA (cytidine(32)/guanosine(34)-2'-O)-methyltransferase (fsjA) (Dictyostelium discoideum (Social amoeba)).